We begin with the raw amino-acid sequence, 590 residues long: Guanylate-binding protein 1 (590 aa).

A GTPase domain (Globular) region spans residues 1–309 (MASEIHMTGP…NAISSGDLPC (309 aa)). In terms of domain architecture, GB1/RHD3-type G spans 35-276 (TQPVVVVAIV…FCSYIFSNSK (242 aa)). Residues 45 to 52 (GLYRTGKS), 67 to 69 (LGS), and 97 to 101 (DTEGL) each bind GTP. S156 carries the phosphoserine modification. C587 carries the post-translational modification Cysteine methyl ester. The S-farnesyl cysteine moiety is linked to residue C587. The residue at position 588 (T588) is a Phosphothreonine. A propeptide spans 588–590 (TIS) (removed in mature form).

The protein belongs to the TRAFAC class dynamin-like GTPase superfamily. GB1/RHD3 GTPase family. GB1 subfamily. As to quaternary structure, homodimer; homodimerization occurs upon GTP-binding and is required for the second hydrolysis step from GDP to GMP. Undergoes conformational changes and oligomerization upon GTP-binding and hydrolysis. Heterodimer with other family members, including GBP2, GBP3, GBP4 and GBP5. Dimerization regulates subcellular location to membranous structures. Interacts with SQSTM1. Interacts (when phosphorylated) with 14-3-3 protein sigma (SFN); leading to GBP1 retention in the cytosol and inactivation. Post-translationally, isoprenylation is required for proper subcellular location. Phosphorylated at Ser-156 by PIM1 in absence of infection, inhibits GBP1: phosphorylation promotes interaction with 14-3-3 protein sigma (SFN), leading to GBP1 retention in the cytosol. Dephosphorylated in response to infection, liberating GBP1.

Its subcellular location is the cytoplasmic vesicle membrane. The protein resides in the golgi apparatus membrane. It localises to the cell membrane. The protein localises to the cytoplasm. It is found in the cytosol. Its subcellular location is the secreted. It catalyses the reaction GTP + H2O = GDP + phosphate + H(+). The enzyme catalyses GDP + H2O = GMP + phosphate + H(+). Interferon (IFN)-inducible GTPase that plays important roles in innate immunity against a diverse range of bacterial, viral and protozoan pathogens. Hydrolyzes GTP to GMP in two consecutive cleavage reactions: GTP is first hydrolyzed to GDP and then to GMP in a processive manner. Following infection, recruited to the pathogen-containing vacuoles or vacuole-escaped bacteria and promotes both inflammasome assembly and autophagy. Acts as a positive regulator of inflammasome assembly by facilitating the detection of inflammasome ligands from pathogens. Involved in the lysis of pathogen-containing vacuoles, releasing pathogens into the cytosol. Following pathogen release in the cytosol, forms a protein coat in a GTPase-dependent manner that encapsulates pathogens and promotes the detection of ligands by pattern recognition receptors. Plays a key role in inflammasome assembly in response to infection by Gram-negative bacteria: following pathogen release in the cytosol, forms a protein coat that encapsulates Gram-negative bacteria and directly binds to lipopolysaccharide (LPS), disrupting the O-antigen barrier and unmasking lipid A that is that detected by the non-canonical inflammasome effector CASP4/CASP11. Also promotes recruitment of proteins that mediate bacterial cytolysis, leading to release double-stranded DNA (dsDNA) that activates the AIM2 inflammasome. Involved in autophagy by regulating bacteriolytic peptide generation via its interaction with ubiquitin-binding protein SQSTM1, which delivers monoubiquitinated proteins to autolysosomes for the generation of bacteriolytic peptides. Confers protection to several pathogens, including the bacterial pathogens L.monocytogenes and M.bovis BCG as well as the protozoan pathogen T.gondii. Exhibits antiviral activity against influenza virus. The protein is Guanylate-binding protein 1 (GBP1) of Chlorocebus aethiops (Green monkey).